Here is a 148-residue protein sequence, read N- to C-terminus: Large ribosomal subunit protein bL9 (148 aa).

This sequence belongs to the bacterial ribosomal protein bL9 family.

Functionally, binds to the 23S rRNA. The chain is Large ribosomal subunit protein bL9 from Azotobacter vinelandii (strain DJ / ATCC BAA-1303).